The following is a 370-amino-acid chain: Cobalt-precorrin-5B C(1)-methyltransferase (370 aa).

It belongs to the CbiD family.

The enzyme catalyses Co-precorrin-5B + S-adenosyl-L-methionine = Co-precorrin-6A + S-adenosyl-L-homocysteine. It participates in cofactor biosynthesis; adenosylcobalamin biosynthesis; cob(II)yrinate a,c-diamide from sirohydrochlorin (anaerobic route): step 6/10. Catalyzes the methylation of C-1 in cobalt-precorrin-5B to form cobalt-precorrin-6A. This is Cobalt-precorrin-5B C(1)-methyltransferase from Nostoc sp. (strain PCC 7120 / SAG 25.82 / UTEX 2576).